We begin with the raw amino-acid sequence, 312 residues long: D-alanine--D-alanine ligase (312 aa).

The ATP-grasp domain maps to 103–303; that stretch reads KQQLVPHGIR…YADLVQAIVD (201 aa). An ATP-binding site is contributed by 130-186; it reads MPRPYVLKPVNEGSSVGVAIIKERDNHGVPIHRDSHGPWQTFATLLAEPFIRGRELT. Mg(2+) is bound by residues aspartate 254, glutamate 270, and asparagine 272.

This sequence belongs to the D-alanine--D-alanine ligase family. Mg(2+) is required as a cofactor. Mn(2+) serves as cofactor.

It is found in the cytoplasm. It catalyses the reaction 2 D-alanine + ATP = D-alanyl-D-alanine + ADP + phosphate + H(+). The protein operates within cell wall biogenesis; peptidoglycan biosynthesis. Cell wall formation. The chain is D-alanine--D-alanine ligase from Rhizorhabdus wittichii (strain DSM 6014 / CCUG 31198 / JCM 15750 / NBRC 105917 / EY 4224 / RW1) (Sphingomonas wittichii).